The sequence spans 166 residues: Telethonin (166 aa).

The residue at position 39 (serine 39) is a Phosphoserine. The segment at 145 to 166 (VSKPGTLRRSLSRSMSQEAQRG) is disordered. Residues 156-166 (SRSMSQEAQRG) are compositionally biased toward polar residues.

Interacts with MYOZ1, MYOZ2 and MYOZ3. Interacts with CSRP3. Interacts directly with the N-terminal Ig-like domains of 2 titin (TTN) molecules. Interacts with ANKRD2; the interaction is direct.

The protein resides in the cytoplasm. It is found in the myofibril. It localises to the sarcomere. Functionally, muscle assembly regulating factor. Mediates the antiparallel assembly of titin (TTN) molecules at the sarcomeric Z-disk. The chain is Telethonin (TCAP) from Bos taurus (Bovine).